The sequence spans 147 residues: UPF0216 protein MK1676 (147 aa).

Belongs to the UPF0216 family.

The chain is UPF0216 protein MK1676 from Methanopyrus kandleri (strain AV19 / DSM 6324 / JCM 9639 / NBRC 100938).